We begin with the raw amino-acid sequence, 336 residues long: MGNCLHQAELSPSTENSSQLNLEDLWNFSYNGNDSFPEIDYDASLAAAAPCHSCSLLNDSSLPFFILASDLGILASSTVLFMLFRPLFRWQLCPGWPVLAQLAVGSALFSIVVPILAPGLGNTHSSALCSLGYCVWYGSAFAQALLLGCHASLGPKLGAGQVPGLTLGLPVGLWGATALLTLPITLASGASDGLCTPIYSTELEALQATHAVACFAIFVLLPLGLFGAKGLKKALGMGPGPWMNILWVWFIFWWPHGLVLGLDFLVGSKLSLLPTCLAQQVLDLLLNLAEALAIVHCVATPLLLALFCHQTTRTLLPSLPLPERWSSPVDTLGSKS.

Over 1–63 (MGNCLHQAEL…CSLLNDSSLP (63 aa)) the chain is Extracellular. N-linked (GlcNAc...) asparagine glycosylation is found at Asn16, Asn27, Asn33, and Asn58. Disulfide bonds link Cys51/Cys276 and Cys129/Cys195. The helical transmembrane segment at 64–84 (FFILASDLGILASSTVLFMLF) threads the bilayer. Over 85-95 (RPLFRWQLCPG) the chain is Cytoplasmic. The helical transmembrane segment at 96 to 116 (WPVLAQLAVGSALFSIVVPIL) threads the bilayer. Topologically, residues 117 to 129 (APGLGNTHSSALC) are extracellular. Residues 130–153 (SLGYCVWYGSAFAQALLLGCHASL) form a helical membrane-spanning segment. The Cytoplasmic portion of the chain corresponds to 154–166 (GPKLGAGQVPGLT). Residues 167–187 (LGLPVGLWGATALLTLPITLA) traverse the membrane as a helical segment. At 188 to 207 (SGASDGLCTPIYSTELEALQ) the chain is on the extracellular side. Residues 208-228 (ATHAVACFAIFVLLPLGLFGA) form a helical membrane-spanning segment. Over 229-244 (KGLKKALGMGPGPWMN) the chain is Cytoplasmic. The helical transmembrane segment at 245 to 265 (ILWVWFIFWWPHGLVLGLDFL) threads the bilayer. Topologically, residues 266–287 (VGSKLSLLPTCLAQQVLDLLLN) are extracellular. A helical transmembrane segment spans residues 288–308 (LAEALAIVHCVATPLLLALFC). Over 309-336 (HQTTRTLLPSLPLPERWSSPVDTLGSKS) the chain is Cytoplasmic.

It belongs to the G-protein coupled receptor 1 family. Atypical chemokine receptor subfamily.

It localises to the early endosome. It is found in the recycling endosome. The protein resides in the membrane. Functionally, atypical chemokine receptor that controls chemokine levels and localization via high-affinity chemokine binding that is uncoupled from classic ligand-driven signal transduction cascades, resulting instead in chemokine sequestration, degradation, or transcytosis. Also known as interceptor (internalizing receptor) or chemokine-scavenging receptor or chemokine decoy receptor. Has a promiscuous chemokine-binding profile, interacting with inflammatory chemokines of both the CXC and the CC subfamilies but not with homeostatic chemokines. Acts as a receptor for chemokines including CCL2, CCL5, CCL7, CCL11, CCL13, CCL14, CCL17, CXCL5, CXCL6, IL8/CXCL8, CXCL11, GRO, RANTES, MCP-1 and TARC. May regulate chemokine bioavailability and, consequently, leukocyte recruitment through two distinct mechanisms: when expressed in endothelial cells, it sustains the abluminal to luminal transcytosis of tissue-derived chemokines and their subsequent presentation to circulating leukocytes; when expressed in erythrocytes, serves as blood reservoir of cognate chemokines but also as a chemokine sink, buffering potential surges in plasma chemokine levels. This chain is Atypical chemokine receptor 1 (ACKR1), found in Saimiri boliviensis boliviensis (Bolivian squirrel monkey).